The primary structure comprises 218 residues: Leucine-rich repeat protein 1 (218 aa).

Residues 1–27 (MASRNYRWELFAASLTLTLALIHLVEA) form the signal peptide. LRR repeat units lie at residues 94-117 (EHLQ…LGNL), 119-140 (NLIS…SLGK), 141-165 (LKSL…LTAI), and 167-190 (SLKV…PFAH).

As to quaternary structure, interacts with HIR1.

Involved in plant defense response. This chain is Leucine-rich repeat protein 1, found in Arabidopsis thaliana (Mouse-ear cress).